The primary structure comprises 366 residues: Phospho-N-acetylmuramoyl-pentapeptide-transferase (366 aa).

10 helical membrane-spanning segments follow: residues 3–23 (QIII…PVLI), 52–72 (MGGI…GIVG), 80–100 (LTAS…LGFA), 120–140 (LIGQ…FPNA), 161–181 (LAIG…YILI), 197–217 (LAAG…FWQF), 238–258 (LAIL…WNAA), 262–282 (IFMG…LSVA), 287–307 (LLMI…VIQV), and 341–361 (FWLI…GEWL).

This sequence belongs to the glycosyltransferase 4 family. MraY subfamily. It depends on Mg(2+) as a cofactor.

The protein localises to the cell membrane. The enzyme catalyses UDP-N-acetyl-alpha-D-muramoyl-L-alanyl-gamma-D-glutamyl-meso-2,6-diaminopimeloyl-D-alanyl-D-alanine + di-trans,octa-cis-undecaprenyl phosphate = di-trans,octa-cis-undecaprenyl diphospho-N-acetyl-alpha-D-muramoyl-L-alanyl-D-glutamyl-meso-2,6-diaminopimeloyl-D-alanyl-D-alanine + UMP. The protein operates within cell wall biogenesis; peptidoglycan biosynthesis. Functionally, catalyzes the initial step of the lipid cycle reactions in the biosynthesis of the cell wall peptidoglycan: transfers peptidoglycan precursor phospho-MurNAc-pentapeptide from UDP-MurNAc-pentapeptide onto the lipid carrier undecaprenyl phosphate, yielding undecaprenyl-pyrophosphoryl-MurNAc-pentapeptide, known as lipid I. This is Phospho-N-acetylmuramoyl-pentapeptide-transferase from Corynebacterium diphtheriae (strain ATCC 700971 / NCTC 13129 / Biotype gravis).